The primary structure comprises 102 residues: NADH-quinone oxidoreductase subunit K (102 aa).

Transmembrane regions (helical) follow at residues 6 to 26, 30 to 50, and 63 to 83; these read LIAM…GVLA, IMFQ…GFVA, and MFIL…ALFL.

This sequence belongs to the complex I subunit 4L family. In terms of assembly, NDH-1 is composed of 14 different subunits. Subunits NuoA, H, J, K, L, M, N constitute the membrane sector of the complex.

It is found in the cell inner membrane. It catalyses the reaction a quinone + NADH + 5 H(+)(in) = a quinol + NAD(+) + 4 H(+)(out). Functionally, NDH-1 shuttles electrons from NADH, via FMN and iron-sulfur (Fe-S) centers, to quinones in the respiratory chain. The immediate electron acceptor for the enzyme in this species is believed to be ubiquinone. Couples the redox reaction to proton translocation (for every two electrons transferred, four hydrogen ions are translocated across the cytoplasmic membrane), and thus conserves the redox energy in a proton gradient. The protein is NADH-quinone oxidoreductase subunit K of Rhodopseudomonas palustris (strain BisB5).